The following is a 462-amino-acid chain: uncharacterized protein (462 aa).

2 helical membrane-spanning segments follow: residues 381–401 (WILG…FKGM) and 433–453 (LWIL…NLYI).

The protein resides in the cell membrane. This is an uncharacterized protein from Methanocaldococcus jannaschii (strain ATCC 43067 / DSM 2661 / JAL-1 / JCM 10045 / NBRC 100440) (Methanococcus jannaschii).